We begin with the raw amino-acid sequence, 160 residues long: Prostaglandin E synthase 3 (160 aa).

The 90-residue stretch at 1-90 folds into the CS domain; sequence MQPASAKWYD…ESGQSWPRLT (90 aa). Position 33 is an N6-acetyllysine (K33). Residue K35 forms a Glycyl lysine isopeptide (Lys-Gly) (interchain with G-Cter in SUMO2) linkage. Residue S44 is modified to Phosphoserine. K65 participates in a covalent cross-link: Glycyl lysine isopeptide (Lys-Gly) (interchain with G-Cter in SUMO2). Phosphoserine occurs at positions 85, 100, 113, and 118. The disordered stretch occupies residues 118-160; the sequence is SNFDRFSEMMDHMGGDEDVDLPEVDGADDDSQDSDDEKMPDLE. Over residues 122 to 132 the composition is skewed to basic and acidic residues; that stretch reads RFSEMMDHMGG. A compositionally biased stretch (acidic residues) spans 133–153; that stretch reads DEDVDLPEVDGADDDSQDSDD. Phosphoserine is present on residues S148 and S151. The short motif at 157–160 is the PXLE motif element; sequence PDLE.

It belongs to the p23/wos2 family. In terms of assembly, probably forms a complex composed of chaperones HSP90 and HSP70, co-chaperones STIP1/HOP, CDC37, PPP5C, PTGES3/p23, TSC1 and client protein TSC2. Binds to the progesterone receptor. Interacts with TERT; the interaction, together with HSP90AA1, is required for correct assembly and stabilization of the telomerase holoenzyme complex. Interacts (via PXLE motif) with EGLN1/PHD2, recruiting EGLN1/PHD2 to the HSP90 pathway to facilitate HIF alpha proteins hydroxylation. Interacts with HSP90AA1, FLCN, FNIP1 and FNIP2. Post-translationally, proteolytically cleaved by caspase-7 (CASP7) in response to apoptosis, leading to its inactivation. In terms of tissue distribution, expressed in testis, kidney, bladder and ovary.

It is found in the cytoplasm. It carries out the reaction prostaglandin H2 = prostaglandin E2. The protein operates within lipid metabolism; prostaglandin biosynthesis. Its function is as follows. Cytosolic prostaglandin synthase that catalyzes the oxidoreduction of prostaglandin endoperoxide H2 (PGH2) to prostaglandin E2 (PGE2). Molecular chaperone that localizes to genomic response elements in a hormone-dependent manner and disrupts receptor-mediated transcriptional activation, by promoting disassembly of transcriptional regulatory complexes. Facilitates HIF alpha proteins hydroxylation via interaction with EGLN1/PHD2, leading to recruit EGLN1/PHD2 to the HSP90 pathway. This is Prostaglandin E synthase 3 (Ptges3) from Mus musculus (Mouse).